Reading from the N-terminus, the 153-residue chain is UPF0260 protein Plav_0898 (153 aa).

Belongs to the UPF0260 family.

This chain is UPF0260 protein Plav_0898, found in Parvibaculum lavamentivorans (strain DS-1 / DSM 13023 / NCIMB 13966).